The chain runs to 299 residues: MALTHLQQLEAESIKIMREVAAEFENPVMLYSIGKDSSVLLHLARKAFYPAKIPFPLLHVDTNWKFSEMIEFRDRIAKEYGFELLVHKNPEGMEIGISPFEHGSGKHTDIMKTQGLKQALDKYGFDAAFGGARRDEEKSRAKERVYSFRDKHHRWDPKNQRPELWNTYNSQVNPGESIRVFPLSNWTELDIWQYIYQENIDMVPLYLAKERPVVDRDGTLIMVDDERMPLLEGEVPMMKSVRFRTLGCYPLTGAVESTASSLTEIIEEMLLSTSSEREGRVIDHDSAGSMEKKKREGYF.

The disordered stretch occupies residues 276–299 (EREGRVIDHDSAGSMEKKKREGYF).

This sequence belongs to the PAPS reductase family. CysD subfamily. As to quaternary structure, heterodimer composed of CysD, the smaller subunit, and CysN.

It carries out the reaction sulfate + ATP + H(+) = adenosine 5'-phosphosulfate + diphosphate. It participates in sulfur metabolism; hydrogen sulfide biosynthesis; sulfite from sulfate: step 1/3. In terms of biological role, with CysN forms the ATP sulfurylase (ATPS) that catalyzes the adenylation of sulfate producing adenosine 5'-phosphosulfate (APS) and diphosphate, the first enzymatic step in sulfur assimilation pathway. APS synthesis involves the formation of a high-energy phosphoric-sulfuric acid anhydride bond driven by GTP hydrolysis by CysN coupled to ATP hydrolysis by CysD. This chain is Sulfate adenylyltransferase subunit 2, found in Pseudoalteromonas translucida (strain TAC 125).